Here is a 213-residue protein sequence, read N- to C-terminus: dITP/XTP pyrophosphatase (213 aa).

Position 7–12 (7–12 (TSNLDK)) interacts with substrate. Catalysis depends on aspartate 74, which acts as the Proton acceptor. Residue aspartate 74 participates in Mg(2+) binding. Substrate contacts are provided by residues serine 75, 165–168 (FGYD), lysine 188, and 193–194 (HR).

The protein belongs to the HAM1 NTPase family. As to quaternary structure, homodimer. The cofactor is Mg(2+).

The enzyme catalyses XTP + H2O = XMP + diphosphate + H(+). The catalysed reaction is dITP + H2O = dIMP + diphosphate + H(+). It carries out the reaction ITP + H2O = IMP + diphosphate + H(+). Its function is as follows. Pyrophosphatase that catalyzes the hydrolysis of nucleoside triphosphates to their monophosphate derivatives, with a high preference for the non-canonical purine nucleotides XTP (xanthosine triphosphate), dITP (deoxyinosine triphosphate) and ITP. Seems to function as a house-cleaning enzyme that removes non-canonical purine nucleotides from the nucleotide pool, thus preventing their incorporation into DNA/RNA and avoiding chromosomal lesions. The polypeptide is dITP/XTP pyrophosphatase (Campylobacter concisus (strain 13826)).